A 613-amino-acid polypeptide reads, in one-letter code: Transcription factor Sp2 (613 aa).

Residues methionine 1–proline 32 form a disordered region. Polar residues predominate over residues alanine 23–proline 32. Position 78 is a phosphoserine (serine 78). The span at threonine 225–serine 235 shows a compositional bias: polar residues. A disordered region spans residues threonine 225–proline 258. Residues glycine 361–glutamine 369 carry the 9aaTAD; inactive motif. A compositionally biased stretch (low complexity) spans proline 372 to serine 389. Residues proline 372–alanine 404 form a disordered region. 3 consecutive C2H2-type zinc fingers follow at residues histidine 525–histidine 549, phenylalanine 555–histidine 579, and phenylalanine 585–histidine 607.

The protein belongs to the Sp1 C2H2-type zinc-finger protein family.

The protein localises to the nucleus. Functionally, binds to GC box promoters elements and selectively activates mRNA synthesis from genes that contain functional recognition sites. In Homo sapiens (Human), this protein is Transcription factor Sp2 (SP2).